The chain runs to 347 residues: Protein RecA (347 aa).

66-73 contributes to the ATP binding site; the sequence is GPESSGKT. A disordered region spans residues 328-347; sequence MPKPNAPKATDEALDETGTD.

Belongs to the RecA family.

The protein localises to the cytoplasm. Can catalyze the hydrolysis of ATP in the presence of single-stranded DNA, the ATP-dependent uptake of single-stranded DNA by duplex DNA, and the ATP-dependent hybridization of homologous single-stranded DNAs. It interacts with LexA causing its activation and leading to its autocatalytic cleavage. This is Protein RecA from Hydrogenovibrio crunogenus (strain DSM 25203 / XCL-2) (Thiomicrospira crunogena).